We begin with the raw amino-acid sequence, 120 residues long: Nitrogen regulatory protein GlnK3 (120 aa).

ADP is bound by residues Thr-40 and 48-50 (GEQ). ATP contacts are provided by residues Thr-40 and 48 to 50 (GEQ). Residues 48-52 (GEQKG) and Lys-69 contribute to the 2-oxoglutarate site. Residues Val-75 and 98–101 (GDGR) contribute to the ADP site. ATP-binding positions include Val-75 and 98–101 (GDGR). Gly-98 serves as a coordination point for 2-oxoglutarate.

The protein belongs to the P(II) protein family. In terms of assembly, homotrimer. Interacts and forms a complex with Amt3.

The protein localises to the cytoplasm. Its activity is regulated as follows. Activity is influenced by intracellular pools of the effector molecules ATP, ADP and 2-oxoglutarate. It senses the cellular nitrogen status through 2-oxoglutarate, and the energy level of the cell by binding both ATP and ADP with different affinities. ATP and 2-oxoglutarate prohibit binding to Amt3. ADP promotes the complex formation. Functionally, involved in the regulation of nitrogen metabolism. Regulates the activity of its targets by protein-protein interaction in response to the nitrogen status of the cell. Regulates the activity of the ammonia channel Amt3 via direct interaction. This is Nitrogen regulatory protein GlnK3 from Archaeoglobus fulgidus (strain ATCC 49558 / DSM 4304 / JCM 9628 / NBRC 100126 / VC-16).